A 571-amino-acid polypeptide reads, in one-letter code: DDB1- and CUL4-associated factor 11 homolog (571 aa).

The tract at residues 51–75 is disordered; sequence RMKPNHSNDSDTDFSSDDEGCPKMT. The span at 60 to 69 shows a compositional bias: acidic residues; the sequence is SDTDFSSDDE. 6 WD repeats span residues 162-201, 266-305, 309-349, 357-396, 435-479, and 482-521; these read RVAT…SKYR, RDHC…RIRT, AHED…DGDV, GHRD…NMSG, GHSV…VSRR, and GHTA…EGVI.

The protein belongs to the WD repeat LEC14B family.

Its function is as follows. Involved in regulation of lifespan. Required for dopaminergic CEP neuron degeneration in response to Mn(2+). Inhibits the skn-1-mediated up-regulation of tatn-1. This is DDB1- and CUL4-associated factor 11 homolog from Caenorhabditis elegans.